The primary structure comprises 76 residues: MSIEERVKKIIVEQLGVKEEEVKSESSFIEDLGADSLDTVELVMALEEEFDIEIPDEEAEKITTVQSAIDYVQNNQ.

The Carrier domain maps to Met1–Gln76. At Ser36 the chain carries O-(pantetheine 4'-phosphoryl)serine.

This sequence belongs to the acyl carrier protein (ACP) family. Post-translationally, 4'-phosphopantetheine is transferred from CoA to a specific serine of apo-ACP by AcpS. This modification is essential for activity because fatty acids are bound in thioester linkage to the sulfhydryl of the prosthetic group.

Its subcellular location is the cytoplasm. Its pathway is lipid metabolism; fatty acid biosynthesis. In terms of biological role, carrier of the growing fatty acid chain in fatty acid biosynthesis. This is Acyl carrier protein from Actinobacillus succinogenes (strain ATCC 55618 / DSM 22257 / CCUG 43843 / 130Z).